The following is a 404-amino-acid chain: G1/S-specific cyclin-E2 (404 aa).

A disordered region spans residues 1–41; sequence MSRRSSRLQAKQHAQPNQPDSPQETQIIQAKKRKTAQDVKK. Positions 7-28 are enriched in polar residues; it reads RLQAKQHAQPNQPDSPQETQII. Ser21 is modified (phosphoserine). Residue Lys348 is modified to N6-lactoyllysine. Residue Ser383 is modified to Phosphoserine. Phosphothreonine is present on Thr392.

It belongs to the cyclin family. Cyclin E subfamily. Interacts with the CDK2 (in vivo) and CDK3 (in vitro) protein kinases to form a serine/threonine kinase holoenzyme complex. The cyclin subunit imparts substrate specificity to the complex. Phosphorylation by CDK2 triggers its release from CDK2 and degradation via the ubiquitin proteasome pathway. In terms of processing, lactylated at Lys-348. Delactylated by SIRT3. As to expression, highest levels in adult testis, thymus and brain. Lower levels in placenta, spleen and colon.

The protein resides in the nucleus. Essential for the control of the cell cycle at the late G1 and early S phase. In Mus musculus (Mouse), this protein is G1/S-specific cyclin-E2 (Ccne2).